The primary structure comprises 149 residues: Large ribosomal subunit protein bL9 (149 aa).

It belongs to the bacterial ribosomal protein bL9 family.

Binds to the 23S rRNA. This chain is Large ribosomal subunit protein bL9, found in Dichelobacter nodosus (strain VCS1703A).